The following is a 355-amino-acid chain: Fructose-1,6-bisphosphatase class 1 (355 aa).

The Mg(2+) site is built by Glu94, Asp116, Leu118, and Asp119. Residues 119–122 (DGSS), Asn211, and 263–265 (YLY) each bind substrate. Position 283 (Glu283) interacts with Mg(2+).

Belongs to the FBPase class 1 family. In terms of assembly, homotetramer. Requires Mg(2+) as cofactor.

It localises to the cytoplasm. It catalyses the reaction beta-D-fructose 1,6-bisphosphate + H2O = beta-D-fructose 6-phosphate + phosphate. It participates in carbohydrate biosynthesis; Calvin cycle. In Rhodospirillum rubrum (strain ATCC 11170 / ATH 1.1.1 / DSM 467 / LMG 4362 / NCIMB 8255 / S1), this protein is Fructose-1,6-bisphosphatase class 1.